Reading from the N-terminus, the 830-residue chain is MNLKQFTCLSCAQLLAILLFIFAFFPRKIVLTGISKQDPDQDRDLQRDRPFQKLVFVIIDALRSDFLFDSQISHFNNVHQWLNTGEAWGYTSFANPPTVTLPRLKSITTGSTPSFIDLLLNVAQDIDSNDLSEHDSWLQQFIQHNNTIRFMGDDTWLKLFPQQWFDFADPTHSFFVSDFTQVDNNVTRNLPGKLFQEWAQWDVAILHYLGLDHIGHKDGPHSKFMAAKHQEMDSILKSIYDEVLEHEDDDDTLICVLGDHGMNELGNHGGSSAGETSAGLLFLSPKLAQFARPESQVNYTLPINASPDWNFQYLETVQQIDIVPTIAALFGMPIPMNSVGIIIPDFLQLLPNKLASMKENFMHLWKLSDHHGEVALDDFTAEDIYTKMYTIQETLTKSATNYNYPLLTLAFVGFLIITIIAIYVLLRYSGPDFWQLRVSSLSVLLVSIILGVSTFASSFIEEEHQLWWWIVTAFSAVPLFVYRLNVLIIVRWFIMMACVRSIKFWNNSGQKFIYSNVMSNLLNQNPSWKWCLNMLTFLVLIMASAGFQVLHFIVTTILVGLCFTYKISWEIVNGNQAEIPLFMHDLLAKIDFAPTESNLIVLARVFFQAWAIVVISRLVLTKLKVLNKNYLIKDMKVYITILLMFQTSSQNIGQFLVFQILESQIFYFFQNIPTASLTSTSKIYFSNLVSLILQNFTFFQFGGTNSISTIDLGNAYHGVSSDYNIYVVGILMSVANFAPAIYWSMLPWSINYASIPAQVKLQTFIRSKLPAFTYHCIFGTCLMTACVVLRFHLFIWSVFSPKLCYFLGWNFVMGLLNGWLPELALLCALD.

The first 32 residues, 1 to 32 (MNLKQFTCLSCAQLLAILLFIFAFFPRKIVLT), serve as a signal peptide directing secretion. Over 33 to 321 (GISKQDPDQD…QYLETVQQID (289 aa)) the chain is Lumenal. Residues Asn145, Asn185, and Asn298 are each glycosylated (N-linked (GlcNAc...) asparagine). A helical membrane pass occupies residues 322-342 (IVPTIAALFGMPIPMNSVGII). Topologically, residues 343 to 405 (IPDFLQLLPN…TKSATNYNYP (63 aa)) are cytoplasmic. A helical membrane pass occupies residues 406-426 (LLTLAFVGFLIITIIAIYVLL). Residues 427 to 439 (RYSGPDFWQLRVS) are Lumenal-facing. A helical transmembrane segment spans residues 440-460 (SLSVLLVSIILGVSTFASSFI). Residues 461–469 (EEEHQLWWW) are Cytoplasmic-facing. The chain crosses the membrane as a helical span at residues 470–490 (IVTAFSAVPLFVYRLNVLIIV). The Lumenal portion of the chain corresponds to 491–533 (RWFIMMACVRSIKFWNNSGQKFIYSNVMSNLLNQNPSWKWCLN). N-linked (GlcNAc...) asparagine glycosylation is present at Asn506. Residues 534–554 (MLTFLVLIMASAGFQVLHFIV) traverse the membrane as a helical segment. Residues 555 to 598 (TTILVGLCFTYKISWEIVNGNQAEIPLFMHDLLAKIDFAPTESN) lie on the Cytoplasmic side of the membrane. A helical transmembrane segment spans residues 599 to 619 (LIVLARVFFQAWAIVVISRLV). At 620–651 (LTKLKVLNKNYLIKDMKVYITILLMFQTSSQN) the chain is on the lumenal side. Residues 652 to 672 (IGQFLVFQILESQIFYFFQNI) traverse the membrane as a helical segment. The Cytoplasmic segment spans residues 673–682 (PTASLTSTSK). Residues 683–703 (IYFSNLVSLILQNFTFFQFGG) traverse the membrane as a helical segment. The Lumenal portion of the chain corresponds to 704-724 (TNSISTIDLGNAYHGVSSDYN). Residues 725–745 (IYVVGILMSVANFAPAIYWSM) traverse the membrane as a helical segment. Topologically, residues 746 to 768 (LPWSINYASIPAQVKLQTFIRSK) are cytoplasmic. A helical membrane pass occupies residues 769-789 (LPAFTYHCIFGTCLMTACVVL). The Lumenal portion of the chain corresponds to 790–805 (RFHLFIWSVFSPKLCY). Residues 806 to 826 (FLGWNFVMGLLNGWLPELALL) form a helical membrane-spanning segment. Residues 827–830 (CALD) lie on the Cytoplasmic side of the membrane.

Belongs to the PIGG/PIGN/PIGO family. PIGG subfamily. Post-translationally, N-glycosylated.

It is found in the endoplasmic reticulum membrane. It participates in glycolipid biosynthesis; glycosylphosphatidylinositol-anchor biosynthesis. In terms of biological role, ethanolamine phosphate transferase involved in glycosylphosphatidylinositol-anchor biosynthesis. Transfers ethanolamine phosphate to the GPI second mannose. Although not essential, addition of ethanolamine phosphate to the second mannose plays an important role in cell separation via the GPI-based modification of daughter-specific proteins. This chain is GPI ethanolamine phosphate transferase 2 (LAS21), found in Saccharomyces cerevisiae (strain ATCC 204508 / S288c) (Baker's yeast).